The chain runs to 78 residues: Acyl carrier protein (78 aa).

Residues 2–77 enclose the Carrier domain; it reads STIEERVKKI…EAIDYVTAHA (76 aa). At Ser37 the chain carries O-(pantetheine 4'-phosphoryl)serine.

Belongs to the acyl carrier protein (ACP) family. Post-translationally, 4'-phosphopantetheine is transferred from CoA to a specific serine of apo-ACP by AcpS. This modification is essential for activity because fatty acids are bound in thioester linkage to the sulfhydryl of the prosthetic group.

It localises to the cytoplasm. Its pathway is lipid metabolism; fatty acid biosynthesis. Its function is as follows. Carrier of the growing fatty acid chain in fatty acid biosynthesis. The protein is Acyl carrier protein of Ectopseudomonas mendocina (strain ymp) (Pseudomonas mendocina).